A 308-amino-acid chain; its full sequence is UPF0282 protein M1425_2116 (308 aa).

The protein belongs to the UPF0282 family.

This is UPF0282 protein M1425_2116 from Saccharolobus islandicus (strain M.14.25 / Kamchatka #1) (Sulfolobus islandicus).